The primary structure comprises 197 residues: Probable nicotinate-nucleotide adenylyltransferase (197 aa).

Belongs to the NadD family.

The enzyme catalyses nicotinate beta-D-ribonucleotide + ATP + H(+) = deamido-NAD(+) + diphosphate. Its pathway is cofactor biosynthesis; NAD(+) biosynthesis; deamido-NAD(+) from nicotinate D-ribonucleotide: step 1/1. In terms of biological role, catalyzes the reversible adenylation of nicotinate mononucleotide (NaMN) to nicotinic acid adenine dinucleotide (NaAD). This Leptospira borgpetersenii serovar Hardjo-bovis (strain JB197) protein is Probable nicotinate-nucleotide adenylyltransferase.